The following is a 788-amino-acid chain: Integrin beta-6 (788 aa).

A signal peptide spans 1–21 (MGIELLCLFFLFLGRNDHVQG). The 50-residue stretch at 22-71 (GCALGGAETCEDCLLIGPQCAWCSQENFTYLSGVGERCDTPANLLAKGCQ) folds into the PSI domain. Residues 22 to 709 (GCALGGAETC…KDCPKPPNSP (688 aa)) are Extracellular-facing. Disulfide bonds link Cys-23-Cys-41, Cys-31-Cys-454, Cys-34-Cys-59, Cys-44-Cys-70, Cys-197-Cys-204, Cys-252-Cys-293, Cys-394-Cys-406, Cys-426-Cys-452, Cys-456-Cys-476, Cys-467-Cys-479, Cys-481-Cys-490, Cys-492-Cys-519, Cys-502-Cys-517, Cys-511-Cys-522, Cys-524-Cys-537, Cys-539-Cys-560, Cys-544-Cys-558, Cys-552-Cys-563, Cys-565-Cys-574, Cys-576-Cys-599, Cys-583-Cys-597, Cys-591-Cys-602, Cys-604-Cys-614, Cys-617-Cys-620, Cys-624-Cys-670, Cys-630-Cys-649, Cys-633-Cys-645, and Cys-678-Cys-702. N-linked (GlcNAc...) asparagine glycans are attached at residues Asn-48 and Asn-97. Positions 131-371 (YPVDLYYLMD…QLIISAYEEL (241 aa)) constitute a VWFA domain. 3 residues coordinate Mg(2+): Asp-140, Ser-142, and Ser-144. Positions 144, 147, 148, and 179 each coordinate Ca(2+). The Ca(2+) site is built by Asn-235, Asp-237, Pro-239, and Glu-240. A Mg(2+)-binding site is contributed by Glu-240. An N-linked (GlcNAc...) asparagine glycan is attached at Asn-260. Positions 271 and 355 each coordinate Ca(2+). A glycan (N-linked (GlcNAc...) asparagine) is linked at Asn-387. Asn-418 carries N-linked (GlcNAc...) asparagine glycosylation. I-EGF domains follow at residues 456-491 (CQKE…PHCE), 492-538 (CGED…PYCQ), 539-575 (CDDF…EYCN), and 576-615 (CTTS…LTCE). 2 N-linked (GlcNAc...) asparagine glycosylation sites follow: Asn-463 and Asn-471. A helical membrane pass occupies residues 710-730 (MIMLGVSLAILLIGVVLLCIW). An interaction with HAX1 region spans residues 731 to 758 (KLLVSFHDRKEVAKFEAERSKAKWQTGT). Residues 731–788 (KLLVSFHDRKEVAKFEAERSKAKWQTGTNPLYRGSTSTFKNVTYKHREKQKVDLSMDG) lie on the Cytoplasmic side of the membrane.

It belongs to the integrin beta chain family. In terms of assembly, heterodimer of an alpha and a beta subunit. Interacts with FLNB. Interacts with HAX1. ITGAV:ITGB6 interacts with FBN1. ITGAV:ITGB6 interacts with TGFB1.

It localises to the cell membrane. The protein resides in the cell junction. Its subcellular location is the focal adhesion. Its function is as follows. Integrin alpha-V:beta-6 (ITGAV:ITGB6) is a receptor for fibronectin and cytotactin. It recognizes the sequence R-G-D in its ligands. ITGAV:ITGB6 acts as a receptor for fibrillin-1 (FBN1) and mediates R-G-D-dependent cell adhesion to FBN1. Integrin alpha-V:beta-6 (ITGAV:ITGB6) mediates R-G-D-dependent release of transforming growth factor beta-1 (TGF-beta-1) from regulatory Latency-associated peptide (LAP), thereby playing a key role in TGF-beta-1 activation. The polypeptide is Integrin beta-6 (ITGB6) (Sus scrofa (Pig)).